A 291-amino-acid chain; its full sequence is ATP synthase gamma chain (291 aa).

It belongs to the ATPase gamma chain family. In terms of assembly, F-type ATPases have 2 components, CF(1) - the catalytic core - and CF(0) - the membrane proton channel. CF(1) has five subunits: alpha(3), beta(3), gamma(1), delta(1), epsilon(1). CF(0) has three main subunits: a, b and c.

It localises to the cell inner membrane. Its function is as follows. Produces ATP from ADP in the presence of a proton gradient across the membrane. The gamma chain is believed to be important in regulating ATPase activity and the flow of protons through the CF(0) complex. This Burkholderia lata (strain ATCC 17760 / DSM 23089 / LMG 22485 / NCIMB 9086 / R18194 / 383) protein is ATP synthase gamma chain.